The following is a 956-amino-acid chain: Probable hypoxanthine oxidase XdhD (956 aa).

Positions 414, 445, and 727 each coordinate Mo-molybdopterin.

The protein belongs to the xanthine dehydrogenase family. [2Fe-2S] cluster is required as a cofactor. The cofactor is Mo-molybdopterin.

Functionally, probably has no xanthine dehydrogenase activity; however deletion results in increased adenine sensitivity, suggesting that this protein contributes to the conversion of adenine to guanine nucleotides during purine salvage. This is Probable hypoxanthine oxidase XdhD (xdhD) from Escherichia coli O157:H7.